Here is a 93-residue protein sequence, read N- to C-terminus: YcgL domain-containing protein Spea_2443 (93 aa).

Residues 1–85 (MICAVYKSLR…PVVNLLEQHK (85 aa)) form the YcgL domain.

This chain is YcgL domain-containing protein Spea_2443, found in Shewanella pealeana (strain ATCC 700345 / ANG-SQ1).